Reading from the N-terminus, the 297-residue chain is Transmembrane protein 169 (297 aa).

The tract at residues 1–84 is disordered; sequence MEEPALVEGQ…PKEEEGDDFI (84 aa). Residues 1-159 are Extracellular-facing; that stretch reads MEEPALVEGQ…CQLGADRGPH (159 aa). A compositionally biased stretch (polar residues) spans 9–18; sequence GQSQLPSPHH. A compositionally biased stretch (acidic residues) spans 60 to 84; sequence ETLDEEPGESEGGDQPKEEEGDDFI. The chain crosses the membrane as a helical span at residues 160–180; it reads VVLWTLVCLPVVFLLSFVVSF. Residues 181-210 are Cytoplasmic-facing; the sequence is YYGTITWYNIFLVYNEERTFWHKISCCPCL. A helical membrane pass occupies residues 211 to 231; it reads ILCYPVLIMAMASSLGLYAAV. At 232–297 the chain is on the extracellular side; it reads VQLSWSWEAW…ATQEIETSAV (66 aa).

Its subcellular location is the membrane. The protein is Transmembrane protein 169 (TMEM169) of Bos taurus (Bovine).